The sequence spans 158 residues: MKKVPLQVCVSNKQCDVPIRIQSVKKLVLCCLQCWKVSTDQVYVYFLDDEALAQLHDEVFADPSLTDTITLPIDSPESTAHPHILGEAFISPKAAIRFLQDRAEDTDLLYEEISRYVVHSLLHMLGYDDQTPEERKKMRGKENQALCMLREKHALLSD.

Positions 119, 123, and 129 each coordinate Zn(2+).

This sequence belongs to the endoribonuclease YbeY family. Zn(2+) serves as cofactor.

Its subcellular location is the cytoplasm. Its function is as follows. Single strand-specific metallo-endoribonuclease involved in late-stage 70S ribosome quality control and in maturation of the 3' terminus of the 16S rRNA. The chain is Endoribonuclease YbeY from Chlamydia abortus (strain DSM 27085 / S26/3) (Chlamydophila abortus).